Consider the following 324-residue polypeptide: Methenyltetrahydromethanopterin cyclohydrolase (324 aa).

It belongs to the MCH family.

The protein localises to the cytoplasm. It catalyses the reaction 5,10-methenyl-5,6,7,8-tetrahydromethanopterin + H2O = N(5)-formyl-5,6,7,8-tetrahydromethanopterin + H(+). It functions in the pathway one-carbon metabolism; formaldehyde degradation; formate from formaldehyde (H(4)MPT route): step 3/5. Its function is as follows. Catalyzes the hydrolysis of methenyl-H(4)MPT(+) to 5-formyl-H(4)MPT. The chain is Methenyltetrahydromethanopterin cyclohydrolase from Methylobacterium nodulans (strain LMG 21967 / CNCM I-2342 / ORS 2060).